The primary structure comprises 1082 residues: Carbamoyl phosphate synthase large chain (1082 aa).

The interval 1 to 401 (MPKDKALKKV…ALLKAVRSLE (401 aa)) is carboxyphosphate synthetic domain. Positions 129, 169, 175, 176, 208, 210, 215, 241, 242, 243, 284, and 298 each coordinate ATP. Residues 133–327 (KNMCLEIGEP…IAKVATKVAV (195 aa)) form the ATP-grasp 1 domain. Residues Gln284, Glu298, and Asn300 each coordinate Mg(2+). Gln284, Glu298, and Asn300 together coordinate Mn(2+). The oligomerization domain stretch occupies residues 402-561 (TGVTGMNLPE…YSTYEDEDEA (160 aa)). Residues 562 to 944 (EPQAVRKVVV…ALYKACLSAG (383 aa)) form a carbamoyl phosphate synthetic domain region. Residues 686 to 876 (DQLVAELGIP…MVNLATRICL (191 aa)) enclose the ATP-grasp 2 domain. ATP contacts are provided by Arg722, Lys761, Leu763, Glu767, Gly792, Ile793, His794, Ser795, Gln835, and Glu847. Mg(2+) is bound by residues Gln835, Glu847, and Asn849. Positions 835, 847, and 849 each coordinate Mn(2+). The 138-residue stretch at 945–1082 (YTLPSSGKAV…PLIPLQEYVS (138 aa)) folds into the MGS-like domain. Residues 945–1082 (YTLPSSGKAV…PLIPLQEYVS (138 aa)) form an allosteric domain region.

Belongs to the CarB family. Composed of two chains; the small (or glutamine) chain promotes the hydrolysis of glutamine to ammonia, which is used by the large (or ammonia) chain to synthesize carbamoyl phosphate. Tetramer of heterodimers (alpha,beta)4. The cofactor is Mg(2+). Mn(2+) serves as cofactor.

It catalyses the reaction hydrogencarbonate + L-glutamine + 2 ATP + H2O = carbamoyl phosphate + L-glutamate + 2 ADP + phosphate + 2 H(+). The enzyme catalyses hydrogencarbonate + NH4(+) + 2 ATP = carbamoyl phosphate + 2 ADP + phosphate + 2 H(+). The protein operates within amino-acid biosynthesis; L-arginine biosynthesis; carbamoyl phosphate from bicarbonate: step 1/1. It participates in pyrimidine metabolism; UMP biosynthesis via de novo pathway; (S)-dihydroorotate from bicarbonate: step 1/3. Large subunit of the glutamine-dependent carbamoyl phosphate synthetase (CPSase). CPSase catalyzes the formation of carbamoyl phosphate from the ammonia moiety of glutamine, carbonate, and phosphate donated by ATP, constituting the first step of 2 biosynthetic pathways, one leading to arginine and/or urea and the other to pyrimidine nucleotides. The large subunit (synthetase) binds the substrates ammonia (free or transferred from glutamine from the small subunit), hydrogencarbonate and ATP and carries out an ATP-coupled ligase reaction, activating hydrogencarbonate by forming carboxy phosphate which reacts with ammonia to form carbamoyl phosphate. The protein is Carbamoyl phosphate synthase large chain of Desulforudis audaxviator (strain MP104C).